Reading from the N-terminus, the 969-residue chain is Poly(ADP-ribose) glycohydrolase (969 aa).

Disordered stretches follow at residues 1–149 (MSAG…QQQT), 161–341 (HAEQ…CQAR), and 368–400 (NNAG…GKRD). Positions 1 to 449 (MSAGPGWEPC…LPPEKKWLGT (449 aa)) are A-domain. Residues 10–16 (CTKRPRW) carry the Nuclear localization signal motif. The span at 69 to 84 (NATSFVFKQKTITTWM) shows a compositional bias: polar residues. The short motif at 77 to 84 (QKTITTWM) is the PIP-box (PCNA interacting peptide) element. The span at 87-100 (KGPKTAESESKENN) shows a compositional bias: basic and acidic residues. The span at 101-113 (NTRIDSMMSSVQK) shows a compositional bias: polar residues. The span at 116-125 (FYPHKVEKLE) shows a compositional bias: basic and acidic residues. 2 stretches are compositionally biased toward polar residues: residues 128–149 (PQLN…QQQT) and 179–189 (QLSNANIGQSP). A Phosphoserine modification is found at S135. Position 137 is a phosphothreonine (T137). Basic and acidic residues predominate over residues 190–205 (HTDDHSDTDHEEDRDN). Phosphoserine is present on S195. The residue at position 197 (T197) is a Phosphothreonine. The segment covering 226-237 (ARSNCKCSGSRQ) has biased composition (polar residues). Residues S256, S259, S281, S286, S293, S297, and S311 each carry the phosphoserine modification. A compositionally biased stretch (polar residues) spans 275–284 (KLTGQESSLG). Over residues 311 to 325 (SEADEETSPVFDEQD) the composition is skewed to acidic residues. Composition is skewed to polar residues over residues 329–339 (SQTANKLSSCQ) and 369–387 (NAGT…SSLN). At K334 the chain carries N6-acetyllysine. Positions 603-788 (QPIPLLKQKM…TEQYSEYTGY (186 aa)) are catalytic. 719-720 (IE) contacts substrate. The active site involves D730. N733 and Q747 together coordinate substrate. Residues E748 and E749 contribute to the active site. Substrate is bound by residues Y788 and 862–867 (NWGCGA).

This sequence belongs to the poly(ADP-ribose) glycohydrolase family. In terms of assembly, interacts with PCNA. Interacts with NUDT5.

The protein resides in the nucleus. The enzyme catalyses [(1''-&gt;2')-ADP-alpha-D-ribose](n) + H2O = [(1''-&gt;2')-ADP-alpha-D-ribose](n-1) + ADP-D-ribose. In terms of biological role, poly(ADP-ribose) glycohydrolase that degrades poly(ADP-ribose) by hydrolyzing the ribose-ribose bonds present in poly(ADP-ribose). PARG acts both as an endo- and exoglycosidase, releasing poly(ADP-ribose) of different length as well as ADP-ribose monomers. It is however unable to cleave the ester bond between the terminal ADP-ribose and ADP-ribosylated residues, leaving proteins that are mono-ADP-ribosylated. Poly(ADP-ribose) is synthesized after DNA damage is only present transiently and is rapidly degraded by PARG. Required to prevent detrimental accumulation of poly(ADP-ribose) upon prolonged replicative stress, while it is not required for recovery from transient replicative stress. Responsible for the prevalence of mono-ADP-ribosylated proteins in cells, thanks to its ability to degrade poly(ADP-ribose) without cleaving the terminal protein-ribose bond. Required for retinoid acid-dependent gene transactivation, probably by removing poly(ADP-ribose) from histone demethylase KDM4D, allowing chromatin derepression at RAR-dependent gene promoters. Involved in the synthesis of ATP in the nucleus, together with PARP1, NMNAT1 and NUDT5. Nuclear ATP generation is required for extensive chromatin remodeling events that are energy-consuming. This is Poly(ADP-ribose) glycohydrolase from Mus musculus (Mouse).